A 92-amino-acid chain; its full sequence is MPKLEMMLLVLLIFPLSYFIAAGGQVVQVDRRGDGLAGYLQRGDRDVQDCQVSTPGSKWGRCCLNRVCGPMCCPASHCYCVYHRGRGHGCSC.

An N-terminal signal peptide occupies residues 1–24 (MPKLEMMLLVLLIFPLSYFIAAGG). A propeptide spanning residues 25–45 (QVVQVDRRGDGLAGYLQRGDR) is cleaved from the precursor. Residues Pro55, Pro70, and Pro74 each carry the 4-hydroxyproline; partial modification. 4 disulfide bridges follow: Cys63-Cys72, Cys68-Cys80, Cys73-Cys90, and Cys78-Cys92.

It belongs to the conotoxin D superfamily. Homodimer or pseudo-homodimer. Three dimers exist: homodimer of VxXXA, pseudo-homodimer of both VxXXA and [hydroxyPro-74]VxXXA and homodimer of [hydroxyPro-74]VxXXA. These three components exist in a 1:2:1 ratio. In terms of processing, vxXXA stands for the form with the Pro-55 hydroxylated. A second major form has both Pro-55 and Pro-74 hydroxylated. The two major forms VxXXA and [hydroxyPro-74]VxXXA exist in a 1:1 ratio. Post-translationally, minor forms are [hydroxyPro-70,hydroxyPro-74]VxXXA and [Pro-55]VxXXA. In terms of tissue distribution, expressed by the venom duct.

Its subcellular location is the secreted. Functionally, alpha-conotoxins act on postsynaptic membranes, they bind to the nicotinic acetylcholine receptors (nAChR) and thus inhibit them. Through its two C-terminal domains, this homodimeric protein would bind to two nAChR allosteric sites, located outside the nAChR C-loop of the principal binding face and at the adjacent binding interface in a clockwise direction. This toxin specifically blocks mammalian neuronal nAChR of the alpha-7/CHRNA7, alpha-3-beta-2/CHRNA3-CHRNB2 (IC(50)=370 nM) and alpha-4-beta-2/CHRNA4-CHRNB2 subtypes. VxXXB inhibits alpha-7/CHRNA7 and alpha-3-beta-2/CHRNA3-CHRNB2 nAChR subtypes with the highest efficiency, followed by VxXXA and VxXXC. VxXXB and VxXXC inhibit the alpha-4-beta-2/CHRNA4-CHRNB2 nAChR subtype more efficiently than VxXXA. The sequence is that of Alpha-conotoxin VxXXA from Conus vexillum (Flag cone).